The following is a 1008-amino-acid chain: RNA cytidine acetyltransferase (1008 aa).

ATP is bound by residues 282–291 and Arg443; that span reads GRGKSAALGL. The N-acetyltransferase domain maps to 531 to 713; sequence CLLGPVQRMD…VPVYLSQKSN (183 aa). Acetyl-CoA is bound by residues 601 to 603, 608 to 614, and Asn700; these read VAT and QRMGYGK. Residue Ser907 is modified to Phosphoserine. A disordered region spans residues 950 to 1008; sequence ALETNGTGGGSGLLSVKSGVKRLDGPIETREDGDLAAPLSKKKKKNNPKQRRSQGKSLI. A compositionally biased stretch (basic and acidic residues) spans 970-982; it reads KRLDGPIETREDG. Residues 989–1008 show a composition bias toward basic residues; it reads SKKKKKNNPKQRRSQGKSLI.

It belongs to the RNA cytidine acetyltransferase family. NAT10 subfamily. Component of the PRC1 complex (PSC, PC, PH and dRING1) in 0-12 hours Drosophila embryos. This complex is distinct from the Esc/E(z) complex, which contains many other PcG proteins like Esc, E(z), Su(z)12, HDAC1/Rpd3, Caf1-55 and probably Pho. The two complexes however cooperate and interact together during the first 3 hours of development to establish PcG silencing. Part of the small subunit (SSU) processome, composed of more than 70 proteins and the RNA chaperone small nucleolar RNA (snoRNA) U3.

It localises to the nucleus. The protein localises to the nucleolus. The catalysed reaction is a cytidine in 18S rRNA + acetyl-CoA + ATP + H2O = an N(4)-acetylcytidine in 18S rRNA + ADP + phosphate + CoA + H(+). It carries out the reaction a cytidine in tRNA + acetyl-CoA + ATP + H2O = an N(4)-acetylcytidine in tRNA + ADP + phosphate + CoA + H(+). In terms of biological role, RNA cytidine acetyltransferase with specificity toward both 18S rRNA and tRNAs. Catalyzes the formation of N(4)-acetylcytidine (ac4C) in 18S rRNA. Required for early nucleolar cleavages of precursor rRNA at sites A0, A1 and A2 during 18S rRNA synthesis. Catalyzes the formation of ac4C in serine and leucine tRNAs. Requires a tRNA-binding adapter protein for full tRNA acetyltransferase activity but not for 18S rRNA acetylation. Polycomb group (PcG) protein. PcG proteins act by forming multiprotein complexes, which are required to maintain the transcriptionally repressive state of homeotic genes throughout development. PcG proteins are not required to initiate repression, but to maintain it during later stages of development. They probably act via the methylation of histones, rendering chromatin heritably changed in its expressibility. Part of the small subunit (SSU) processome, first precursor of the small eukaryotic ribosomal subunit. During the assembly of the SSU processome in the nucleolus, many ribosome biogenesis factors, an RNA chaperone and ribosomal proteins associate with the nascent pre-rRNA and work in concert to generate RNA folding, modifications, rearrangements and cleavage as well as targeted degradation of pre-ribosomal RNA by the RNA exosome. This Drosophila melanogaster (Fruit fly) protein is RNA cytidine acetyltransferase (l(1)G0020).